The following is a 501-amino-acid chain: Glucose N-acetyltransferase 1 (501 aa).

The Cytoplasmic portion of the chain corresponds to 1–11 (MRLVSRRRLKG). Residues 12–32 (LALVAFALIGITIFVRILMEF) form a helical; Signal-anchor for type II membrane protein membrane-spanning segment. At 33-501 (QLEREVSFYK…SPKASEIQAA (469 aa)) the chain is on the lumenal side. N-linked (GlcNAc...) asparagine glycosylation is present at Asn-176. The short motif at 197 to 199 (DND) is the DXD element.

Belongs to the GNT1 family.

The protein resides in the golgi apparatus membrane. It is found in the vacuole membrane. N-acetylglucosaminyltransferase involved in the Golgi-specific modification of N-linked glycans. In Candida glabrata (strain ATCC 2001 / BCRC 20586 / JCM 3761 / NBRC 0622 / NRRL Y-65 / CBS 138) (Yeast), this protein is Glucose N-acetyltransferase 1 (GNT1).